Here is a 457-residue protein sequence, read N- to C-terminus: Argininosuccinate lyase (457 aa).

Belongs to the lyase 1 family. Argininosuccinate lyase subfamily.

Its subcellular location is the cytoplasm. It carries out the reaction 2-(N(omega)-L-arginino)succinate = fumarate + L-arginine. The protein operates within amino-acid biosynthesis; L-arginine biosynthesis; L-arginine from L-ornithine and carbamoyl phosphate: step 3/3. This Escherichia coli O139:H28 (strain E24377A / ETEC) protein is Argininosuccinate lyase.